Here is a 230-residue protein sequence, read N- to C-terminus: RING finger protein 141 (230 aa).

The segment at 154–191 adopts an RING-type zinc-finger fold; sequence ECCICMDGRVDLILPCAHSFCQKCIDKWSDRHRSCPVC.

This Gallus gallus (Chicken) protein is RING finger protein 141 (RNF141).